The sequence spans 98 residues: Citrate lyase acyl carrier protein (98 aa).

S14 is subject to O-(phosphoribosyl dephospho-coenzyme A)serine.

Belongs to the CitD family. In terms of assembly, oligomer with a subunit composition of (alpha,beta,gamma)6.

It localises to the cytoplasm. Its function is as follows. Covalent carrier of the coenzyme of citrate lyase. The protein is Citrate lyase acyl carrier protein of Albidiferax ferrireducens (strain ATCC BAA-621 / DSM 15236 / T118) (Rhodoferax ferrireducens).